The chain runs to 470 residues: Sugar transporter ERD6-like 8 (470 aa).

The span at 1–16 (METRKDDMEKRNDKSE) shows a compositional bias: basic and acidic residues. The disordered stretch occupies residues 1–24 (METRKDDMEKRNDKSEPLLLPENG). The next 12 membrane-spanning stretches (helical) occupy residues 33-53 (WMVY…GTCV), 73-93 (QFSV…ITSG), 110-130 (VISA…PLDF), 133-153 (FLTG…IAEI), 164-184 (TLNQ…GAVV), 188-208 (TLAL…WFIP), 270-290 (FVIV…NGVI), 307-327 (GSIL…TLLI), 335-355 (LLMA…NSFL), 373-393 (GVLV…WVIM), 409-429 (VTVV…FLMI), and 434-454 (GTFY…AKLV).

Belongs to the major facilitator superfamily. Sugar transporter (TC 2.A.1.1) family.

Its subcellular location is the membrane. Its function is as follows. Sugar transporter. This chain is Sugar transporter ERD6-like 8, found in Arabidopsis thaliana (Mouse-ear cress).